A 198-amino-acid chain; its full sequence is Septum-promoting GTP-binding protein 1 (198 aa).

Residues 6-198 are small GTPase-like; the sequence is KNNVTIKVGM…GDPILEYIDR (193 aa). GTP-binding positions include 17 to 24, 65 to 69, and 122 to 125; these read GDSSIGKT, DLGGQ, and TKYD.

Interacts with cdc7 and cdc11.

Its function is as follows. GTP-binding protein essential for the induction of septum formation at G2 and pre-START stages of mitosis. Acts via the cdc7 protein kinase pathway. The chain is Septum-promoting GTP-binding protein 1 (spg1) from Schizosaccharomyces pombe (strain 972 / ATCC 24843) (Fission yeast).